The following is a 249-amino-acid chain: MILLIDIGNSRTKYVQLISGELSATTQLNNSEFSAEYFTKYFNQASQLIVANVAKSALTDELATWCAREKISYKQVHSEQKKNTLISAYQEPTTLGIDRWLALLGTIHLYPQENVLIIDAGTATTVDLLTSNGQHQGGWILAGINALFTSILSHSTLVHAKSKTMPSLAFGANTSDNVNNACWAATLGMIERAIEQAQQLGDINRIILTGGDGKALTRLLLAQTTENILAVENIQFIDNLIFFGLQEYA.

6–13 (DIGNSRTK) is an ATP binding site. Residues Y89 and 96–99 (GIDR) contribute to the substrate site. Residue D98 is the Proton acceptor of the active site. Residue D119 participates in K(+) binding. Position 122 (T122) interacts with ATP. T174 lines the substrate pocket.

The protein belongs to the type III pantothenate kinase family. In terms of assembly, homodimer. Requires NH4(+) as cofactor. It depends on K(+) as a cofactor.

It localises to the cytoplasm. The catalysed reaction is (R)-pantothenate + ATP = (R)-4'-phosphopantothenate + ADP + H(+). The protein operates within cofactor biosynthesis; coenzyme A biosynthesis; CoA from (R)-pantothenate: step 1/5. In terms of biological role, catalyzes the phosphorylation of pantothenate (Pan), the first step in CoA biosynthesis. The chain is Type III pantothenate kinase from Colwellia psychrerythraea (strain 34H / ATCC BAA-681) (Vibrio psychroerythus).